Here is a 996-residue protein sequence, read N- to C-terminus: Sodium/potassium-transporting ATPase subunit alpha-A (996 aa).

Transmembrane regions (helical) follow at residues 73–93 (LFGG…IAYT) and 107–123 (LYLG…TGCF). The segment at 191-211 (DNSSLTGESEPQSRSTECTND) is disordered. 2 helical membrane passes run 268-290 (FIHI…SFLY) and 297-325 (AAIF…TLTA). Aspartate 353 acts as the 4-aspartylphosphate intermediate in catalysis. Lysine 483 lines the ATP pocket. Mg(2+) is bound by residues aspartate 692 and aspartate 696. 4 helical membrane passes run 762–785 (LSPF…ILCI), 820–847 (ERLI…VIMG), 889–909 (YTCH…DLII), and 926–951 (TLNF…DKGL).

It belongs to the cation transport ATPase (P-type) (TC 3.A.3) family. Type IIC subfamily. In terms of assembly, the sodium/potassium-transporting ATPase is composed of a catalytic alpha subunit, an auxiliary non-catalytic beta subunit and an additional regulatory subunit.

Its subcellular location is the cell membrane. It carries out the reaction K(+)(out) + Na(+)(in) + ATP + H2O = K(+)(in) + Na(+)(out) + ADP + phosphate + H(+). In terms of biological role, this is the catalytic component of the active enzyme, which catalyzes the hydrolysis of ATP coupled with the exchange of sodium and potassium ions across the plasma membrane. This action creates the electrochemical gradient of sodium and potassium ions, providing the energy for active transport of various nutrients. This chain is Sodium/potassium-transporting ATPase subunit alpha-A, found in Artemia franciscana (Brine shrimp).